A 299-amino-acid polypeptide reads, in one-letter code: Small ribosomal subunit protein uS3 (299 aa).

The region spanning V39–R107 is the KH type-2 domain. Residues P214–E299 form a disordered region. The span at K217–A248 shows a compositional bias: basic and acidic residues. Over residues A257 to A282 the composition is skewed to low complexity.

Belongs to the universal ribosomal protein uS3 family. In terms of assembly, part of the 30S ribosomal subunit. Forms a tight complex with proteins S10 and S14.

Functionally, binds the lower part of the 30S subunit head. Binds mRNA in the 70S ribosome, positioning it for translation. In Methylibium petroleiphilum (strain ATCC BAA-1232 / LMG 22953 / PM1), this protein is Small ribosomal subunit protein uS3.